The following is a 502-amino-acid chain: High affinity nitrate transporter 2.5 (502 aa).

Helical transmembrane passes span 51 to 71 (WFQFFCCFVSTFAAPPLLPVI), 87 to 107 (IASVSGAVFARIVMGTACDLF), 111 to 131 (LASAALTLSTAPAVYFTAGIK), 133 to 153 (PIGFIMVRFFAGFSLATFVST), 172 to 192 (IAAGWGNLGGGATQLIMPIVF), 208 to 228 (IAFFIPGLFQTLSAFAVLLFG), 264 to 284 (WITALAYGYCFGVELTIDNII), 300 to 320 (GIIAASFGLANFFARPGGGIF), 334 to 354 (LWAWWIVQTSGGVLCACLGQI), 361 to 381 (IIVMLVFSVFVQAACGLTFGV), 393 to 413 (VSGMTGAGGNVGAVLTQLIFF), and 423 to 443 (GITLMGVMSIACSLPICLIYF). Positions 477 to 502 (LHIGSQKFAETSISERGRATTTHPQT) are disordered.

Belongs to the major facilitator superfamily. Nitrate/nitrite porter (TC 2.A.1.8) family. In terms of assembly, oligomeric molecular complex with NRT3.1. As to expression, expressed in roots, shoots and seeds. Expressed in leaves. Expressed in root hair zone of the primary root and the lateral roots, but not in the lateral root tip or in older parts of the roots. Detected mainly in the epidermis and the cortex. Expressed in shoots only in higher-order veins.

It is found in the cell membrane. In terms of biological role, nitrate transporter involved in the constitutive high-affinity transport system (cHATS) under long-term N starvation conditions. Predominantly expressed in roots of nitrate-deprived plants as a 150 kDa molecular complex with NRT3.1 representing the major contributor to cHATS influx. The principal role of this cHATS is to enable roots previously deprived of nitrate to absorb this ion and initiate induction of nitrate-inducible genes. Not involved in transfer of nitrate from roots to shoots. Contributes to phloem loading of nitrate in shoots during N starvation, but not required for growth and nitrate uptake in young plants. Required for the nitrate uptake-independent plant growth promotion and lateral root response to the rhizospheric Phyllobacterium. Might be involved in the transfer of nitrate from stored pools to cytoplasm. The chain is High affinity nitrate transporter 2.5 (NRT2.5) from Arabidopsis thaliana (Mouse-ear cress).